The sequence spans 362 residues: MNSRVFNFGAGPAMLPEEILKEAQEEFLNWRNTGMSILEIGHRTPEIINLLSTAEQSLRELLNIPKNYHVLFLGGAARAQFAMIPMNLLQPGDEAAYFITGIWSKMAYHEANLLKQAYYLSNEEKEGFVSIPDYQKWELKSNTAYVYYTPNETINGVRFPYVPKTGGVPLVADMTSCLLSEPININQYGLIFAGAQKNIANAGLTVVIIHEDLLKNQPEPVIPTMLNYKNHAEHRSLYATPPVFNCYLASKMFEWIKTQGGIEGLFQRNCLKAAKLYQYLDSTDFYLTPVSKEARSIMNICFSLCYPDLEQKFLYMANERGLKALKGHRFAGGLRASLYNAMPMAGVDALIEFLSEFAKENG.

Position 43 (R43) interacts with L-glutamate. Pyridoxal 5'-phosphate is bound by residues 77–78 (AR), W103, T153, D173, and Q196. K197 is subject to N6-(pyridoxal phosphate)lysine.

This sequence belongs to the class-V pyridoxal-phosphate-dependent aminotransferase family. SerC subfamily. Homodimer. It depends on pyridoxal 5'-phosphate as a cofactor.

The protein resides in the cytoplasm. It carries out the reaction O-phospho-L-serine + 2-oxoglutarate = 3-phosphooxypyruvate + L-glutamate. It catalyses the reaction 4-(phosphooxy)-L-threonine + 2-oxoglutarate = (R)-3-hydroxy-2-oxo-4-phosphooxybutanoate + L-glutamate. It participates in amino-acid biosynthesis; L-serine biosynthesis; L-serine from 3-phospho-D-glycerate: step 2/3. Its pathway is cofactor biosynthesis; pyridoxine 5'-phosphate biosynthesis; pyridoxine 5'-phosphate from D-erythrose 4-phosphate: step 3/5. Catalyzes the reversible conversion of 3-phosphohydroxypyruvate to phosphoserine and of 3-hydroxy-2-oxo-4-phosphonooxybutanoate to phosphohydroxythreonine. This Legionella pneumophila (strain Corby) protein is Phosphoserine aminotransferase.